Consider the following 425-residue polypeptide: MNIKQIKAREVLDSRGNPTVEVDVILDDDTIGSAMVPSGASTGQREALELRDGGTRYLGKGVLKAVEFVNTEICNTLINFGIEDLGKIDQAMIDLDGTETKSRLGANAILAVSLAVAHANANRQHKPLYMSLNQGENYKLPVPMMNIINGGEHANNNVDIQEFMIIPAGAPSFKEALRYGAEVFHHLKAVLEAKNMNTTVGDEGGFAPDLSSNEDAIKVILEAIDNAGYKAGKDIFIGIDAASSEFYENGTYNLVSENKSLNSEEFVDYLANWVENYPIISIEDGMDENDWNGWNLLTKKIGDKVQLVGDDLYVTNSKFLKQGIEKNITNSILIKVNQIGTLTETFQVMKMATDAGYTSVMSHRSGETEDTTIADLAVATGCGQIKTGSLSRSDRLAKYNRLLRIEEELGAKAVYPGLDAFNHLN.

Gln161 is a (2R)-2-phosphoglycerate binding site. Glu203 (proton donor) is an active-site residue. Mg(2+) is bound by residues Asp240, Glu283, and Asp310. Lys335, Arg364, Ser365, and Lys386 together coordinate (2R)-2-phosphoglycerate. Lys335 serves as the catalytic Proton acceptor.

This sequence belongs to the enolase family. As to quaternary structure, component of the RNA degradosome, a multiprotein complex involved in RNA processing and mRNA degradation. Requires Mg(2+) as cofactor.

It localises to the cytoplasm. It is found in the secreted. Its subcellular location is the cell surface. The enzyme catalyses (2R)-2-phosphoglycerate = phosphoenolpyruvate + H2O. It participates in carbohydrate degradation; glycolysis; pyruvate from D-glyceraldehyde 3-phosphate: step 4/5. In terms of biological role, catalyzes the reversible conversion of 2-phosphoglycerate (2-PG) into phosphoenolpyruvate (PEP). It is essential for the degradation of carbohydrates via glycolysis. This chain is Enolase, found in Ruthia magnifica subsp. Calyptogena magnifica.